Reading from the N-terminus, the 95-residue chain is Large ribosomal subunit protein bL28 (95 aa).

The segment at 1–28 (MARKRTLGGKAPQAGNKVSHSQRKTRRQ) is disordered.

Belongs to the bacterial ribosomal protein bL28 family.

This is Large ribosomal subunit protein bL28 from Magnetococcus marinus (strain ATCC BAA-1437 / JCM 17883 / MC-1).